A 224-amino-acid polypeptide reads, in one-letter code: Large ribosomal subunit protein uL1 (224 aa).

It belongs to the universal ribosomal protein uL1 family. Part of the 50S ribosomal subunit.

Binds directly to 23S rRNA. The L1 stalk is quite mobile in the ribosome, and is involved in E site tRNA release. Functionally, protein L1 is also a translational repressor protein, it controls the translation of the L11 operon by binding to its mRNA. In Borrelia hermsii (strain HS1 / DAH), this protein is Large ribosomal subunit protein uL1.